A 149-amino-acid chain; its full sequence is Deoxyuridine 5'-triphosphate nucleotidohydrolase (149 aa).

Substrate-binding positions include 68-70 (RSG), asparagine 81, 85-87 (LID), and methionine 95.

Belongs to the dUTPase family. It depends on Mg(2+) as a cofactor.

The catalysed reaction is dUTP + H2O = dUMP + diphosphate + H(+). It participates in pyrimidine metabolism; dUMP biosynthesis; dUMP from dCTP (dUTP route): step 2/2. Its function is as follows. This enzyme is involved in nucleotide metabolism: it produces dUMP, the immediate precursor of thymidine nucleotides and it decreases the intracellular concentration of dUTP so that uracil cannot be incorporated into DNA. This Methylibium petroleiphilum (strain ATCC BAA-1232 / LMG 22953 / PM1) protein is Deoxyuridine 5'-triphosphate nucleotidohydrolase.